Consider the following 848-residue polypeptide: Leucine--tRNA ligase (848 aa).

Positions 1–21 are disordered; it reads MTENTPGTSAPERFDPATADT. The 'HIGH' region signature appears at 51-61; it reads PYPSGRIHIGH. Residues 625 to 629 carry the 'KMSKS' region motif; the sequence is KMSKS. Residue lysine 628 coordinates ATP.

The protein belongs to the class-I aminoacyl-tRNA synthetase family.

It is found in the cytoplasm. It catalyses the reaction tRNA(Leu) + L-leucine + ATP = L-leucyl-tRNA(Leu) + AMP + diphosphate. The sequence is that of Leucine--tRNA ligase from Novosphingobium aromaticivorans (strain ATCC 700278 / DSM 12444 / CCUG 56034 / CIP 105152 / NBRC 16084 / F199).